The chain runs to 322 residues: Cytochrome c biogenesis protein CcsA (322 aa).

The next 7 membrane-spanning stretches (helical) occupy residues L2–I22, G44–G64, L68–I88, M143–I163, V226–N246, T260–H274, and V289–I309.

This sequence belongs to the CcmF/CycK/Ccl1/NrfE/CcsA family. May interact with Ccs1.

Its subcellular location is the plastid. It localises to the chloroplast thylakoid membrane. In terms of biological role, required during biogenesis of c-type cytochromes (cytochrome c6 and cytochrome f) at the step of heme attachment. The protein is Cytochrome c biogenesis protein CcsA of Brachypodium distachyon (Purple false brome).